We begin with the raw amino-acid sequence, 379 residues long: tRNA(Met) cytidine acetate ligase (379 aa).

Residues 7–20 (ITEYNPFHNGHQYH), glycine 100, asparagine 153, and arginine 178 each bind ATP.

This sequence belongs to the TmcAL family.

The protein localises to the cytoplasm. It carries out the reaction cytidine(34) in elongator tRNA(Met) + acetate + ATP = N(4)-acetylcytidine(34) in elongator tRNA(Met) + AMP + diphosphate. Its function is as follows. Catalyzes the formation of N(4)-acetylcytidine (ac(4)C) at the wobble position of elongator tRNA(Met), using acetate and ATP as substrates. First activates an acetate ion to form acetyladenylate (Ac-AMP) and then transfers the acetyl group to tRNA to form ac(4)C34. This is tRNA(Met) cytidine acetate ligase from Staphylococcus aureus (strain MRSA252).